Reading from the N-terminus, the 913-residue chain is Calcium-activated chloride channel regulator 1 (913 aa).

Positions 1 to 21 (MGPFKSSVFILILHLLEGALS) are cleaved as a signal peptide. Residues 46–199 (DETLIQQIKD…GITGKIEVNK (154 aa)) form a metalloprotease domain region. His-156 contacts Zn(2+). Glu-157 is an active-site residue. His-160 and Asp-167 together coordinate Zn(2+). The 170-residue stretch at 306-475 (IVCLVLDKSG…NGLIDAFGAL (170 aa)) folds into the VWFA domain. N-linked (GlcNAc...) asparagine glycosylation is found at Asn-503, Asn-769, Asn-803, Asn-809, Asn-830, Asn-835, Asn-885, and Asn-889. Residues 866-885 (PPQTPPETPSPDETSAPCPN) are disordered.

This sequence belongs to the CLCR family. In terms of processing, glycosylated. Post-translationally, the translation product is autoproteolytically cleaved by the metalloprotease domain in the endoplasmic reticulum into a N-terminal and a C-terminal products that remain physically associated with each other. The cleavage is necessary for calcium-activated chloride channel (CaCC) activation activity.

The protein resides in the secreted. It localises to the extracellular space. Its function is as follows. May be involved in mediating calcium-activated chloride conductance. May play critical roles in goblet cell metaplasia, mucus hypersecretion, cystic fibrosis and AHR. May be involved in the regulation of mucus production and/or secretion by goblet cells. Involved in the regulation of tissue inflammation in the innate immune response. May play a role as a tumor suppressor. Induces MUC5AC. The chain is Calcium-activated chloride channel regulator 1 (CLCA1) from Macaca mulatta (Rhesus macaque).